Reading from the N-terminus, the 445-residue chain is DNA polymerase IV (445 aa).

One can recognise a UmuC domain in the interval 49–229 (LAHVDCDAFY…KPVGMIWGVG (181 aa)). Asp53 and Asp146 together coordinate Mg(2+). Glu147 is an active-site residue.

It belongs to the DNA polymerase type-Y family. In terms of assembly, monomer. It depends on Mg(2+) as a cofactor.

The protein localises to the cytoplasm. The enzyme catalyses DNA(n) + a 2'-deoxyribonucleoside 5'-triphosphate = DNA(n+1) + diphosphate. Its function is as follows. Poorly processive, error-prone DNA polymerase involved in untargeted mutagenesis. Copies undamaged DNA at stalled replication forks, which arise in vivo from mismatched or misaligned primer ends. These misaligned primers can be extended by PolIV. Exhibits no 3'-5' exonuclease (proofreading) activity. May be involved in translesional synthesis, in conjunction with the beta clamp from PolIII. The protein is DNA polymerase IV of Brucella melitensis biotype 1 (strain ATCC 23456 / CCUG 17765 / NCTC 10094 / 16M).